Consider the following 252-residue polypeptide: Flap endonuclease Xni (252 aa).

D105 is a binding site for Mg(2+). The 5'-3' exonuclease domain occupies 161–251 (VESTQFIDYL…NVNLKQFRIE (91 aa)). The K(+) site is built by L172, A173, P181, V183, and I186. The interval 185 to 190 (GIGPKS) is interaction with DNA.

Belongs to the Xni family. Requires Mg(2+) as cofactor. The cofactor is K(+).

Its function is as follows. Has flap endonuclease activity. During DNA replication, flap endonucleases cleave the 5'-overhanging flap structure that is generated by displacement synthesis when DNA polymerase encounters the 5'-end of a downstream Okazaki fragment. This chain is Flap endonuclease Xni, found in Shewanella halifaxensis (strain HAW-EB4).